A 593-amino-acid polypeptide reads, in one-letter code: NADH-quinone oxidoreductase subunit C/D 1 (593 aa).

An NADH dehydrogenase I subunit C region spans residues 1–193; that stretch reads MPWAKEGDLQ…DNLEGLMNYD (193 aa). Residues 217–593 are NADH dehydrogenase I subunit D; sequence AQIVLNWGPL…IDPVVGETDR (377 aa).

It in the N-terminal section; belongs to the complex I 30 kDa subunit family. In the C-terminal section; belongs to the complex I 49 kDa subunit family. As to quaternary structure, NDH-1 is composed of 13 different subunits. Subunits NuoB, CD, E, F, and G constitute the peripheral sector of the complex.

Its subcellular location is the cell inner membrane. The enzyme catalyses a quinone + NADH + 5 H(+)(in) = a quinol + NAD(+) + 4 H(+)(out). Its function is as follows. NDH-1 shuttles electrons from NADH, via FMN and iron-sulfur (Fe-S) centers, to quinones in the respiratory chain. The immediate electron acceptor for the enzyme in this species is believed to be ubiquinone. Couples the redox reaction to proton translocation (for every two electrons transferred, four hydrogen ions are translocated across the cytoplasmic membrane), and thus conserves the redox energy in a proton gradient. This is NADH-quinone oxidoreductase subunit C/D 1 (nuoC1) from Aquifex aeolicus (strain VF5).